Reading from the N-terminus, the 304-residue chain is Probable aspartoacylase (304 aa).

Zn(2+)-binding residues include H13 and E16. Substrate-binding positions include R55 and N62–R63. H104 is a Zn(2+) binding site. The substrate site is built by E162 and Y272.

It belongs to the AspA/AstE family. Aspartoacylase subfamily. Zn(2+) serves as cofactor.

The catalysed reaction is an N-acyl-L-aspartate + H2O = a carboxylate + L-aspartate. The sequence is that of Probable aspartoacylase from Synechococcus sp. (strain CC9605).